A 304-amino-acid polypeptide reads, in one-letter code: Tyrosine recombinase XerD (304 aa).

Residues 6-91 (EPWRKTLETF…AIRSFHKFLL (86 aa)) enclose the Core-binding (CB) domain. In terms of domain architecture, Tyr recombinase spans 112 to 298 (YLPSVLTIEE…DRSFIKEVHK (187 aa)). Active-site residues include arginine 155, lysine 179, histidine 250, arginine 253, and histidine 276. Tyrosine 285 (O-(3'-phospho-DNA)-tyrosine intermediate) is an active-site residue.

The protein belongs to the 'phage' integrase family. XerD subfamily. Forms a cyclic heterotetrameric complex composed of two molecules of XerC and two molecules of XerD.

Its subcellular location is the cytoplasm. Functionally, site-specific tyrosine recombinase, which acts by catalyzing the cutting and rejoining of the recombining DNA molecules. The XerC-XerD complex is essential to convert dimers of the bacterial chromosome into monomers to permit their segregation at cell division. It also contributes to the segregational stability of plasmids. The protein is Tyrosine recombinase XerD of Chlorobaculum tepidum (strain ATCC 49652 / DSM 12025 / NBRC 103806 / TLS) (Chlorobium tepidum).